The sequence spans 132 residues: TVTVTYDPSNAPSFQQEIANAAQIWNSSVRNVQLRAGGNADFSYYEGNDSRGSYAQTDGHGRGYIFLDYQQNQQYDSTRVTAHETGHVLGLPDHYQGPCSELMSGGGPGPSCTNPYPNAQERSRVNALWANG.

Ca(2+) contacts are provided by aspartate 76 and threonine 78. Residue histidine 83 participates in Zn(2+) binding. Residue glutamate 84 is part of the active site. Histidine 87 and aspartate 93 together coordinate Zn(2+). Cysteine 99 and cysteine 112 are disulfide-bonded.

It belongs to the peptidase M7 family. It depends on Ca(2+) as a cofactor. Zn(2+) is required as a cofactor.

It is found in the secreted. It catalyses the reaction Hydrolyzes proteins with a preference for Tyr or Phe in the P1' position. Has no action on amino-acid p-nitroanilides.. In terms of biological role, specifically hydrolyzes the peptide bond at the imino side of aromatic residues. The protein is Extracellular small neutral protease (snpA) of Streptomyces caespitosus.